We begin with the raw amino-acid sequence, 202 residues long: Inner membrane-spanning protein YciB (202 aa).

6 helical membrane passes run 3 to 23, 46 to 66, 74 to 94, 100 to 120, 145 to 165, and 173 to 193; these read FFLDLLPVILFFVAYKFAGAA, ILIATAVAIAATLAQVLIVWL, MLWVSLAIITLFGGATLVFHN, WKPTVFYWTFAGALAVSALLF, LAWIGFFTLMGFLNLYVAYGY, and FKLFGAMGLMLAFFLGQGFYL.

Belongs to the YciB family.

It localises to the cell inner membrane. Plays a role in cell envelope biogenesis, maintenance of cell envelope integrity and membrane homeostasis. In Azoarcus sp. (strain BH72), this protein is Inner membrane-spanning protein YciB.